Here is a 37-residue protein sequence, read N- to C-terminus: Photosystem I reaction center subunit VIII (37 aa).

The chain crosses the membrane as a helical span at residues 9–29; the sequence is SILVTLVGLVFPAFAMASLFL.

The protein belongs to the PsaI family.

It localises to the plastid. The protein resides in the chloroplast thylakoid membrane. Functionally, may help in the organization of the PsaL subunit. The polypeptide is Photosystem I reaction center subunit VIII (Pelargonium hortorum (Common geranium)).